A 2564-amino-acid chain; its full sequence is MAQVPGEVDNMEGLPAPNNNPAARWESPDRGWEREQPAASTAAASLFECSRIKALADEREAVQKKTFTKWVNSHLARVGCHIGDLYVDLRDGFVLTRLLEVLSGEQLPRPTRGRMRIHSLENVDKALQFLKEQRVHLENVGSHDIVDGNHRLTLGLVWTIILRFQIQVIKIETEDNRETRSAKDALLLWCQMKTAGYPEVNIQNFTTSWRDGLAFNALIHRHRPDLVDFSKLTKSNANYNLQRAFRTAEQHLGLARLLDPEDVNMEAPDEKSIITYVVSFYHYFSKMKALAVEGKRIGKVLDQVLEVGKIIERYEELAAELLAWIHRTVGLISNQKFANSLSGVQQQLQAFTAYCTLEKPVKFQEKGNLEVLLFSIQSKLRACNRRLFVPREGCGIWDIDKAWGELEKAEHEREAALRAELIRQEKLELLAQRFDHKVAMRESWLNENQRLVSQDNFGYELPAVEAAMKKHEAIEADIAAYEERVQGVAELAQALAAEGYYDIRRVAAQRDSVLRQWALLTGLVGARRTRLEQNLALQKVFQEMVYMVDWMEEMQAQLLSRECGQHLVEADDLLQKHGLLEGDIAAQSERVEALNAAALRFSQLQGYQPCDPQVICNRVNHVHGCLAELQEQAARRRAELEASRSLWALLQELEEAESWARDKERLLEAAGGGGAAGAAGAAGTAGGAHDLSSTARLLAQHKILQGELGGRRALLQQALRCGEELVAAGGAVGPGADTVHLVGLAERAASARRRWQRLEEAAARRERRLQEARALHQFGADLDGLLDWLRDAYRLAAAGDFGHDEASSRRLARQHRALTGEVEAHRGPVSGLRRQLATLGGASGAGPLVVALQVRVVEAEQLFAEVTEVAALRRQWLRDALAVYRMFGEVHACELWIGEKEQWLLSMRVPDSLDDVEVVQHRFESLDQEMNSLMGRVLDVNHTVQELVEGGHPSSDEVRSCQDHLNSRWNRIVELVEQRKEEMSAVLLVENHVLEVAEVRAQVREKRRAVESAPRAGGALQWRLSGLEAALQALEPRQAALLEEAALLAERFPAQAARLHQGAEELGAEWGALASAAQACGEAVAAAGRLQRFLHDLDAFLDWLVRAQEAAGGSEGPLPNSLEEADALLARHAALKEEVDQREEDYARIVAASEALLAADGAELGPGLALDEWLPHLELGWHKLLGLWEARREALVQAHIYQLFLRDLRQALVVLRNQEMALSGAELPGTVESVEEALKQHRDFLTTMELSQQKMQVAVQAAEGLLRQGNIYGEQAQEAVTRLLEKNQENQLRAQQWMQKLHDQLELQHFLRDCHELDGWIHEKMLMARDGTREDNHKLHKRWLRHQAFMAELAQNKEWLEKIEREGQQLMQEKPELAASVRKKLGEIRQCWAELESTTQAKARQLFEASKADQLVQSFAELDKKLLHMESQLQDVDPGGDLATVNSQLKKLQSMESQVEEWYREVGELQAQTAALPLEPASKELVGERQNAVGERLVRLLEPLQERRRLLLASKELHQVAHDLDDELAWVQERLPLAMQTERGNGLQAVQQHIKKNQGLRREIQAHGPRLEEVLERAGALASLRSPEAEAVRRGLEQLQSAWAGLREAAERRQQVLDAAFQVEQYYFDVAEVEAWLGEQELLMMSEDKGKDEQSTLQLLKKHLQLEQGVENYEESIAQLSRQCRALLEMGHPDSEQISRRQSQVDRLYVALKELGEERRVALEQQYWLYQLSRQVSELEHWIAEKEVVAGSPELGQDFEHVSVLQEKFSEFASETGMAGRERLAAVNQMVDELIECGHTAAATMAEWKDGLNEAWAELLELMGTRAQLLAASRELHKFFSDARELQGQIEEKRRRLPRLTTPPEPRPSASSMQRTLRAFEHDLQLLVSQVRQLQEGAAQLRTVYAGEHAEAIASREQEVLQGWKELLSACEDARLHVSSTADALRFHSQVRDLLSWMDGIASQIGAADKPRDVSSVEVLMNYHQGLKTELEARVPELTTCQELGRSLLLNKSAMADEIQAQLDKLGTRKEEVSEKWDRHWEWLQQMLEVHQFAQEAVVADAWLTAQEPLLQSRELGSSVDEVEQLIRRHEAFRKAAAAWEERFSSLRRLTTIEKIKAEQSKQPPTPLLGRKFFGDPTELAAKAAPLLRPGGYERGLEPLARRASDTLSAEVRTRVGYVRQELKPERLQPRIDRLPEIPGRVEPAALPAAPEDAAETPATPAAAEQVRPRPERQESADRAEELPRRRRPERQESVDQSEEAARRRRPERQESAEHEAAHSLTLGRYEQMERRRERRERRLERQESSEQEMPIRGDLVKGKATLADIVEQLQEKEAGPGLPAGPSLPQPRELPPGRLPNGLELPERTPRPDRPRARDRPKPRRRPRPREGGEGGGSRRSRSAPAQGGSAPAPPPPPTHTVQHEGFLLRKRELDANRKSSNRSWVSLYCVLSKGELGFYKDSKGPASGSTHGGEPLLSLHKATSEVASDYKKKKHVFKLQTQDGSEFLLQAKDEEEMNGWLEAVASSVAEHAEIARWGQTLPTTSSTDEGNPKREGGDRRASGRRK.

Positions 1 to 37 (MAQVPGEVDNMEGLPAPNNNPAARWESPDRGWEREQP) are disordered. Residues 1 to 282 (MAQVPGEVDN…IITYVVSFYH (282 aa)) form an actin-binding region. Residues 26–36 (ESPDRGWEREQ) are compositionally biased toward basic and acidic residues. 2 consecutive Calponin-homology (CH) domains span residues 61-165 (AVQK…LRFQ) and 180-285 (RSAK…HYFS). 14 Spectrin repeats span residues 311-418 (IERY…AALR), 430-533 (LAQR…RLEQ), 536-641 (ALQK…AELE), 774-879 (ALHQ…WLRD), 884-982 (YRMF…RKEE), 1089-1196 (RLQR…EALV), 1306-1407 (ELQH…RQLF), 1412-1512 (ADQL…RLLL), 1515-1617 (KELH…QQVL), 1623-1725 (VEQY…ALEQ), 1728-1830 (WLYQ…AQLL), 1835-1935 (ELHK…EDAR), 1944-2046 (ALRF…WLQQ), and 2049-2123 (EVHQ…QSKQ). The segment at 1853–1872 (KRRRLPRLTTPPEPRPSASS) is disordered. Over residues 2208–2225 (PAAPEDAAETPATPAAAE) the composition is skewed to low complexity. Disordered regions lie at residues 2208–2439 (PAAP…KSSN) and 2533–2564 (ARWG…GRRK). 3 stretches are compositionally biased toward basic and acidic residues: residues 2227–2254 (VRPR…RQES), 2268–2278 (ERQESAEHEAA), and 2287–2318 (EQME…DLVK). The span at 2343–2355 (PSLPQPRELPPGR) shows a compositional bias: pro residues. Basic and acidic residues-rich tracts occupy residues 2362–2377 (LPER…ARDR) and 2424–2435 (FLLRKRELDANR). The region spanning 2418–2527 (TVQHEGFLLR…WLEAVASSVA (110 aa)) is the PH domain. Over residues 2538 to 2547 (TLPTTSSTDE) the composition is skewed to polar residues. The span at 2548 to 2564 (GNPKREGGDRRASGRRK) shows a compositional bias: basic and acidic residues.

The protein belongs to the spectrin family. Expressed in skeletal muscle at the sarcolemma and in the muscle capillaries (at protein level). Abundantly expressed in brain and pancreatic islets.

The protein localises to the cytoplasm. It is found in the cytoskeleton. Its subcellular location is the cell cortex. The sequence is that of Spectrin beta chain, non-erythrocytic 4 (SPTBN4) from Homo sapiens (Human).